The chain runs to 632 residues: tRNA uridine 5-carboxymethylaminomethyl modification enzyme MnmG (632 aa).

Residues 13–18 (GGGHAG), Val125, and Ser180 contribute to the FAD site. Residue 273–287 (GPRYCPSIEDKVVRF) coordinates NAD(+). Gln370 contributes to the FAD binding site.

It belongs to the MnmG family. In terms of assembly, homodimer. Heterotetramer of two MnmE and two MnmG subunits. FAD is required as a cofactor.

It is found in the cytoplasm. Functionally, NAD-binding protein involved in the addition of a carboxymethylaminomethyl (cmnm) group at the wobble position (U34) of certain tRNAs, forming tRNA-cmnm(5)s(2)U34. The protein is tRNA uridine 5-carboxymethylaminomethyl modification enzyme MnmG of Nitrosospira multiformis (strain ATCC 25196 / NCIMB 11849 / C 71).